Consider the following 737-residue polypeptide: Protein bicaudal D homolog (737 aa).

3 coiled-coil regions span residues 1-255 (MAES…RNAE), 292-319 (GSSD…EKIF), and 547-684 (AENE…DRDR). The segment at 72-97 (YRSQHQRSTRSELENEESLLEESSAK) is disordered. Residues 686–737 (VFKRSSTRAPTRETYQPPRAVRYPGSTTTAQQPAPSSSGGSRGGPRRGDNQQ) are disordered. Residues 710-719 (GSTTTAQQPA) show a composition bias toward polar residues.

The protein belongs to the BicD family. In terms of assembly, component of a dynein-regulating complex composed of at least bicd-1, dlc-1 and egal-1. Interacts with egal-1 and unc-83. As to expression, expressed in the excretory cell, body wall muscles, vulval muscle cells, PVD and FLP sensory neurons and AVF interneurons.

Its subcellular location is the nucleus envelope. It is found in the perikaryon. The protein resides in the cell projection. It localises to the dendrite. Functionally, part of a complex with dlc-1 and egal-1, which is recruited to the nuclear envelope by unc-83, where in turn, it recruits dynein to the nuclear surface and regulates nuclear migration in hypodermal precursor cells. Required for the formation of dendritic branches of PVD sensory neurons. The protein is Protein bicaudal D homolog of Caenorhabditis elegans.